The chain runs to 611 residues: Aspartate--tRNA(Asp/Asn) ligase (611 aa).

Glu174 is a binding site for L-aspartate. Residues 198 to 201 (QLFK) form an aspartate region. Residue Arg220 coordinates L-aspartate. ATP contacts are provided by residues 220 to 222 (RDE) and Gln229. An L-aspartate-binding site is contributed by His467. An ATP-binding site is contributed by Glu501. Arg508 lines the L-aspartate pocket. 553–556 (GLDR) provides a ligand contact to ATP.

It belongs to the class-II aminoacyl-tRNA synthetase family. Type 1 subfamily. In terms of assembly, homodimer.

It localises to the cytoplasm. The enzyme catalyses tRNA(Asx) + L-aspartate + ATP = L-aspartyl-tRNA(Asx) + AMP + diphosphate. Functionally, aspartyl-tRNA synthetase with relaxed tRNA specificity since it is able to aspartylate not only its cognate tRNA(Asp) but also tRNA(Asn). Reaction proceeds in two steps: L-aspartate is first activated by ATP to form Asp-AMP and then transferred to the acceptor end of tRNA(Asp/Asn). The protein is Aspartate--tRNA(Asp/Asn) ligase of Albidiferax ferrireducens (strain ATCC BAA-621 / DSM 15236 / T118) (Rhodoferax ferrireducens).